We begin with the raw amino-acid sequence, 514 residues long: ATP synthase subunit alpha (514 aa).

170–177 (GDRQIGKT) contributes to the ATP binding site.

This sequence belongs to the ATPase alpha/beta chains family. As to quaternary structure, F-type ATPases have 2 components, CF(1) - the catalytic core - and CF(0) - the membrane proton channel. CF(1) has five subunits: alpha(3), beta(3), gamma(1), delta(1), epsilon(1). CF(0) has three main subunits: a(1), b(2) and c(9-12). The alpha and beta chains form an alternating ring which encloses part of the gamma chain. CF(1) is attached to CF(0) by a central stalk formed by the gamma and epsilon chains, while a peripheral stalk is formed by the delta and b chains.

The protein resides in the cell inner membrane. It carries out the reaction ATP + H2O + 4 H(+)(in) = ADP + phosphate + 5 H(+)(out). Produces ATP from ADP in the presence of a proton gradient across the membrane. The alpha chain is a regulatory subunit. The chain is ATP synthase subunit alpha from Pseudomonas fluorescens (strain ATCC BAA-477 / NRRL B-23932 / Pf-5).